The following is a 573-amino-acid chain: 2-succinyl-5-enolpyruvyl-6-hydroxy-3-cyclohexene-1-carboxylate synthase (573 aa).

The protein belongs to the TPP enzyme family. MenD subfamily. As to quaternary structure, homodimer. Mg(2+) serves as cofactor. Requires Mn(2+) as cofactor. It depends on thiamine diphosphate as a cofactor.

It catalyses the reaction isochorismate + 2-oxoglutarate + H(+) = 5-enolpyruvoyl-6-hydroxy-2-succinyl-cyclohex-3-ene-1-carboxylate + CO2. It participates in quinol/quinone metabolism; 1,4-dihydroxy-2-naphthoate biosynthesis; 1,4-dihydroxy-2-naphthoate from chorismate: step 2/7. Its pathway is quinol/quinone metabolism; menaquinone biosynthesis. In terms of biological role, catalyzes the thiamine diphosphate-dependent decarboxylation of 2-oxoglutarate and the subsequent addition of the resulting succinic semialdehyde-thiamine pyrophosphate anion to isochorismate to yield 2-succinyl-5-enolpyruvyl-6-hydroxy-3-cyclohexene-1-carboxylate (SEPHCHC). The polypeptide is 2-succinyl-5-enolpyruvyl-6-hydroxy-3-cyclohexene-1-carboxylate synthase (Shewanella baltica (strain OS185)).